The sequence spans 254 residues: uncharacterized protein (254 aa).

This sequence belongs to the MtxX family.

This is an uncharacterized protein from Methanopyrus kandleri (strain AV19 / DSM 6324 / JCM 9639 / NBRC 100938).